The sequence spans 389 residues: Packaging protein 3 (389 aa).

The segment at 1–131 is interaction with packaging protein 1; it reads MHPVLRQMKP…VKAEVNFQTT (131 aa). The segment at 350 to 389 is disordered; sequence EKENPDGSVSFQQHERGTQSHENGGHAEPAYSRRQLGRFY. Positions 362–374 are enriched in basic and acidic residues; it reads QHERGTQSHENGG.

This sequence belongs to the adenoviridae packaging protein 3 family. In terms of assembly, part of the genome packaging complex composed of packaging proteins 1, 2 and 3; this complex specifically binds to the packaging sequence on the left end of viral genomic DNA and performs packaging of the viral genome. Interacts with hexon-linking protein IIIa; this interaction is required to promote correct genome packaging. Post-translationally, cleaved at different sites by the viral protease during virion maturation.

It is found in the host nucleus. Its function is as follows. Involved in viral genome packaging through its interaction with packaging proteins 1 and 2. After proteolytic cleavage by adenovirus protease, L1 52/55k protein is removed from the capsid during viral maturation. This is Packaging protein 3 from Canine adenovirus serotype 1 (strain CLL) (CAdV-1).